The chain runs to 146 residues: Hemoglobin subunit beta (146 aa).

The region spanning 2–146 (QWSDSERTII…VVMFLGKQYH (145 aa)) is the Globin domain. Residues histidine 63 and histidine 92 each contribute to the heme b site.

Belongs to the globin family. In terms of assembly, heterotetramer of two alpha chains and two beta chains. As to expression, red blood cells.

In terms of biological role, involved in oxygen transport from the lung to the various peripheral tissues. The sequence is that of Hemoglobin subunit beta (hbb) from Artedidraco orianae (Barbeled plunderfish).